A 294-amino-acid chain; its full sequence is 2-dehydro-3-deoxy-phosphogluconate/2-dehydro-3-deoxy-6-phosphogalactonate aldolase (294 aa).

Substrate is bound by residues 43-44 (TT), 130-132 (YNY), and 155-157 (KDT). K155 serves as the catalytic Schiff-base intermediate with substrate.

This sequence belongs to the DapA family. KDPG aldolase subfamily. As to quaternary structure, homotetramer; dimer of dimers.

It catalyses the reaction 2-dehydro-3-deoxy-6-phospho-D-gluconate = D-glyceraldehyde 3-phosphate + pyruvate. It carries out the reaction 2-dehydro-3-deoxy-6-phospho-D-galactonate = D-glyceraldehyde 3-phosphate + pyruvate. It functions in the pathway carbohydrate acid metabolism; 2-dehydro-3-deoxy-D-gluconate degradation; D-glyceraldehyde 3-phosphate and pyruvate from 2-dehydro-3-deoxy-D-gluconate: step 2/2. Involved in the degradation of glucose and galactose via the Entner-Doudoroff pathway. Catalyzes the reversible cleavage of 2-keto-3-deoxy-6-phosphogluconate (KDPG) and 2-keto-3-deoxygluconate (KDG) forming pyruvate and glyceraldehyde 3-phosphate or glyceraldehyde, respectively. It is also able to catalyze the reversible cleavage of 2-keto-3-deoxy-6-phosphogalactonate (KDPGal) and 2-keto-3-deoxygalactonate (KDGal). It is equally active with both D- and L-glyceraldehyde. This is 2-dehydro-3-deoxy-phosphogluconate/2-dehydro-3-deoxy-6-phosphogalactonate aldolase from Saccharolobus solfataricus (Sulfolobus solfataricus).